The primary structure comprises 372 residues: Actin-related protein 2/3 complex subunit 1B (372 aa).

WD repeat units lie at residues 6–45 (FLVE…WVQV), 50–89 (EHNG…WKPT), 94–135 (RINR…WVCK), 140–179 (PIRS…VEER), 242–280 (SETL…GKLS), and 324–367 (LHKN…SALK).

It belongs to the WD repeat ARPC1 family. As to quaternary structure, component of the Arp2/3 complex composed of ACTR2/ARP2, ACTR3/ARP3, ARPC1B/p41-ARC, ARPC2/p34-ARC, ARPC3/p21-ARC, ARPC4/p20-ARC and ARPC5/p16-ARC.

It localises to the cytoplasm. The protein localises to the cytoskeleton. The protein resides in the nucleus. Functionally, component of the Arp2/3 complex, a multiprotein complex that mediates actin polymerization upon stimulation by nucleation-promoting factor (NPF). The Arp2/3 complex mediates the formation of branched actin networks in the cytoplasm, providing the force for cell motility. In addition to its role in the cytoplasmic cytoskeleton, the Arp2/3 complex also promotes actin polymerization in the nucleus, thereby regulating gene transcription and repair of damaged DNA. The Arp2/3 complex promotes homologous recombination (HR) repair in response to DNA damage by promoting nuclear actin polymerization, leading to drive motility of double-strand breaks (DSBs). This is Actin-related protein 2/3 complex subunit 1B (ARPC1B) from Bos taurus (Bovine).